We begin with the raw amino-acid sequence, 236 residues long: MEKRDELYRGKAKSVYKTDDADRLILLFRNDTSAFDGKRIEQLDRKGMVNNKFNAFIMQKLEEAGVPTQFDKLLGDNECLVKKLDMIPVECVVRNYAAGSLVKRLGVEEGIKLEPSTFELFLKNDEKGDPFINESHVVAFGWGTAEQLVEMKKLSLKVNEVLSKLFDDAGLLLVDFKLEFGVFHGQIVLGDEFSPDGCRLWDKETRKKMDKDRFRQGLGDVIEAYEEVAKRLGVPL.

The protein belongs to the SAICAR synthetase family.

The enzyme catalyses 5-amino-1-(5-phospho-D-ribosyl)imidazole-4-carboxylate + L-aspartate + ATP = (2S)-2-[5-amino-1-(5-phospho-beta-D-ribosyl)imidazole-4-carboxamido]succinate + ADP + phosphate + 2 H(+). The protein operates within purine metabolism; IMP biosynthesis via de novo pathway; 5-amino-1-(5-phospho-D-ribosyl)imidazole-4-carboxamide from 5-amino-1-(5-phospho-D-ribosyl)imidazole-4-carboxylate: step 1/2. This chain is Phosphoribosylaminoimidazole-succinocarboxamide synthase, found in Pseudomonas entomophila (strain L48).